Consider the following 55-residue polypeptide: Ferredoxin (55 aa).

4Fe-4S ferredoxin-type domains follow at residues 2–27 (YFITDACISCGACESECPVSPISPGD) and 28–55 (SVYVIDADACIECGACANVCPVDAPQQK). Cys8, Cys11, Cys14, Cys18, Cys37, Cys40, Cys43, and Cys47 together coordinate [4Fe-4S] cluster.

It depends on [4Fe-4S] cluster as a cofactor.

Its function is as follows. Ferredoxins are iron-sulfur proteins that transfer electrons in a wide variety of metabolic reactions. The protein is Ferredoxin of Acetivibrio thermocellus (Hungateiclostridium thermocellum).